The following is a 305-amino-acid chain: tRNA pseudouridine synthase B (305 aa).

Asp-41 acts as the Nucleophile in catalysis.

It belongs to the pseudouridine synthase TruB family. Type 1 subfamily.

The catalysed reaction is uridine(55) in tRNA = pseudouridine(55) in tRNA. Functionally, responsible for synthesis of pseudouridine from uracil-55 in the psi GC loop of transfer RNAs. The sequence is that of tRNA pseudouridine synthase B from Prochlorococcus marinus (strain MIT 9515).